The following is a 1264-amino-acid chain: Imitation switch two complex protein 1 (1264 aa).

Residues 23–130 (VQVWHIEETG…GEVVYLRKQK (108 aa)) form the WAC domain. 5 disordered regions span residues 130-153 (KDSSTTSSNSQQSTPQPDDMVEIN), 275-374 (PVVA…PANA), 482-508 (QEIENNGLPMKNKAETTTEEDSENPSD), 627-655 (ATEVQKESDAKNETNSESDSKSDSDSEER), and 803-825 (LNKTDENTPSADGADKKDDSESN). Low complexity predominate over residues 132 to 147 (SSTTSSNSQQSTPQPD). 2 stretches are compositionally biased toward polar residues: residues 280 to 289 (RSNSANVSSP) and 299 to 310 (KSSGKSNTSNDA). The DDT domain maps to 423 to 483 (FDSFGKLLQA…IRTQTSKEQE (61 aa)).

In terms of assembly, component of the ISW2 complex, which at least consists of ISW2, ITC1, DLS1 and DPB4. May form a stable subcomplex with ISW2.

The protein localises to the nucleus. Functions as a component of the ISW2 complex, which acts in remodeling the chromatin by catalyzing an ATP-dependent alteration in the structure of nucleosomal DNA. The ISW2 complex is involved in coordinating transcriptional repression and in inheritance of telomeric silencing. It is involved in repression of MAT a-specific genes, INO1, and early meiotic genes during mitotic growth dependent upon transcription factor UME6 and in a parallel pathway to the RPD3-SIN3 histone deacetylase complex. ITC1 is required for nucleosome-stimulated ATPase activity and chromatin-remodeling activity of the complex. Required for the repression of MATa a-specific genes. In Saccharomyces cerevisiae (strain ATCC 204508 / S288c) (Baker's yeast), this protein is Imitation switch two complex protein 1 (ITC1).